Reading from the N-terminus, the 429-residue chain is MSRDPGSGGWEEAPRAAAALCTLYHEAGQRLRRLQDQLAARDALIARLRARLAALEGDAAPSLVDALLEQVARFREQLRRQEGGAAEAQMRQEIERLTERLEEKEREMQQLLSQPQHEREKEVVLLRRSMAEGERARAASDVLCRSLANETHQLRRTLTATAHMCQHLAKCLDERQHAQRNVGERSPDQSEHTDGHTSVQSVIEKLQEENRLLKQKVTHVEDLNAKWQRYNASRDEYVRGLHAQLRGLQIPHEPELMRKEISRLNRQLEEKINDCAEVKQELAASRTARDAALERVQMLEQQILAYKDDFMSERADRERAQSRIQELEEKVASLLHQVSWRQDSREPDAGRIHAGSKTAKYLAADALELMVPGGWRPGTGSQQPEPPAEGGHPGAAQRGQGDLQCPHCLQCFSDEQGEELLRHVAECCQ.

Ser-7 carries the phosphoserine modification. Residues 29–117 are a coiled coil; the sequence is QRLRRLQDQL…MQQLLSQPQH (89 aa). The segment covering 177–195 has biased composition (basic and acidic residues); the sequence is HAQRNVGERSPDQSEHTDG. The tract at residues 177-199 is disordered; it reads HAQRNVGERSPDQSEHTDGHTSV. 2 coiled-coil regions span residues 196–226 and 255–340; these read HTSV…LNAK and ELMR…QVSW. A ubiquitin-binding domain (UBD) region spans residues 289–347; it reads RDAALERVQMLEQQILAYKDDFMSERADRERAQSRIQELEEKVASLLHQVSWRQDSREP. Residues 372 to 400 are disordered; that stretch reads PGGWRPGTGSQQPEPPAEGGHPGAAQRGQ. Residues 388-397 show a composition bias toward low complexity; it reads AEGGHPGAAQ. The segment at 397-429 adopts a CCHC NOA-type zinc-finger fold; it reads QRGQGDLQCPHCLQCFSDEQGEELLRHVAECCQ. The Zn(2+) site is built by Cys-405, Cys-408, His-423, and Cys-427.

Interacts with STK11/LKB1, TNFAIP3, IKBKG, NFKB1, MAP3K8, TEK, RIPK1, CHUK, IKBKB and SMARCD1. Interacts with polyubiquitin. In terms of assembly, (Microbial infection) Interacts with severe fever with thrombocytopenia syndrome virus (SFTSV) NSs; this interaction promotes TPL2 complex formation and signaling activity leading to IL-10 production. In terms of processing, in vitro phosphorylated by CHUK. Post-translationally, ubiquitinated; undergoes 'Lys-48'-linked polyubiquitination probably leading to constitutive proteasomal degradation which can be impaired by IKK-A/CHUK or IKBKB probably involving deubiquitination. Deubiquitinated by USP35; leading to stabilization and inhibition of TNFalpha-induced NF-kappa-B activation. In terms of tissue distribution, ubiquitously expressed in all tissues examined.

It is found in the cytoplasm. The protein localises to the nucleus. In terms of biological role, inhibits NF-kappa-B activation by blocking the interaction of RIPK1 with its downstream effector NEMO/IKBKG. Forms a ternary complex with NFKB1 and MAP3K8 but appears to function upstream of MAP3K8 in the TLR4 signaling pathway that regulates MAP3K8 activation. Involved in activation of the MEK/ERK signaling pathway during innate immune response; this function seems to be stimulus- and cell type specific. Required for stability of MAP3K8. Involved in regulation of apoptosis in endothelial cells; promotes TEK agonist-stimulated endothelial survival. May act as transcriptional coactivator when translocated to the nucleus. Enhances CHUK-mediated NF-kappa-B activation involving NF-kappa-B p50-p65 and p50-c-Rel complexes. The protein is TNFAIP3-interacting protein 2 of Homo sapiens (Human).